The chain runs to 356 residues: Cyanide hydratase (356 aa).

Positions 6 to 285 (YKAAAVTSEP…DGLLFVDIDL (280 aa)) constitute a CN hydrolase domain. E46 (proton acceptor) is an active-site residue. K128 is a catalytic residue. C163 functions as the Nucleophile in the catalytic mechanism.

It belongs to the carbon-nitrogen hydrolase superfamily. Nitrilase family. Oligomer of dimers, forming left-handed helical fibers.

It catalyses the reaction formamide = hydrogen cyanide + H2O. Catalyzes the hydration of cyanide to formamide. Degradation of cyanide may be important for plant pathogenic fungi in infection of cyanogenic plants. The chain is Cyanide hydratase from Leptosphaeria maculans (Blackleg fungus).